The following is a 941-amino-acid chain: Bifunctional glutamine synthetase adenylyltransferase/adenylyl-removing enzyme (941 aa).

An adenylyl removase region spans residues 1-437 (MPMPTVSMSP…AAEFAELLAP (437 aa)). The adenylyl transferase stretch occupies residues 444–941 (PDALADYWRA…FPLGKDETAL (498 aa)).

It belongs to the GlnE family. Mg(2+) is required as a cofactor.

The catalysed reaction is [glutamine synthetase]-O(4)-(5'-adenylyl)-L-tyrosine + phosphate = [glutamine synthetase]-L-tyrosine + ADP. It catalyses the reaction [glutamine synthetase]-L-tyrosine + ATP = [glutamine synthetase]-O(4)-(5'-adenylyl)-L-tyrosine + diphosphate. Its function is as follows. Involved in the regulation of glutamine synthetase GlnA, a key enzyme in the process to assimilate ammonia. When cellular nitrogen levels are high, the C-terminal adenylyl transferase (AT) inactivates GlnA by covalent transfer of an adenylyl group from ATP to specific tyrosine residue of GlnA, thus reducing its activity. Conversely, when nitrogen levels are low, the N-terminal adenylyl removase (AR) activates GlnA by removing the adenylyl group by phosphorolysis, increasing its activity. The regulatory region of GlnE binds the signal transduction protein PII (GlnB) which indicates the nitrogen status of the cell. The polypeptide is Bifunctional glutamine synthetase adenylyltransferase/adenylyl-removing enzyme (Xanthomonas axonopodis pv. citri (strain 306)).